The primary structure comprises 192 residues: Thymidine kinase (192 aa).

ATP contacts are provided by residues 9–16 (SAMNAGKS) and 87–90 (DECQ). Residue E88 is the Proton acceptor of the active site. 4 residues coordinate Zn(2+): C145, C147, C182, and H185.

This sequence belongs to the thymidine kinase family. As to quaternary structure, homotetramer.

It localises to the cytoplasm. It catalyses the reaction thymidine + ATP = dTMP + ADP + H(+). This Vibrio vulnificus (strain YJ016) protein is Thymidine kinase.